The chain runs to 457 residues: RNA-binding suppressor of PAS kinase protein 1 (457 aa).

The region spanning 26-88 (RIFIIELENS…SCVILFKGEN (63 aa)) is the R3H domain. Disordered regions lie at residues 142-181 (IDGN…IEKE), 195-291 (LNKS…NGGY), and 406-457 (FQGK…KLNI). Positions 145–158 (NTRTPNSNLTANSN) are enriched in polar residues. Basic and acidic residues predominate over residues 159–181 (KDQKIEIDDKSSTDLEQERIEKE). At serine 198 the chain carries Phosphoserine. Residues 226–247 (SNTQTSNGSVSSSSPFNSSVTT) show a composition bias toward low complexity. Residues 248–258 (IQVNKPQQQFY) are compositionally biased toward polar residues. Positions 418-435 (KRSDDSNSNKNEGIRRAS) are enriched in basic and acidic residues. 3 positions are modified to phosphoserine: serine 435, serine 439, and serine 447. Residues 443–457 (RDTDSVEMKFDKLNI) show a composition bias toward basic and acidic residues.

The protein resides in the cytoplasm. The protein is RNA-binding suppressor of PAS kinase protein 1 (RBS1) of Saccharomyces cerevisiae (strain ATCC 204508 / S288c) (Baker's yeast).